An 843-amino-acid polypeptide reads, in one-letter code: Toll-like receptor 4 (843 aa).

Residues 1 to 23 (MMPPTRLAGTLIPAMAFLSCLRP) form the signal peptide. The LRRNT domain occupies 24 to 54 (ESWDPCVQVVPNTTYQCMDLNLYKIPENIPT). Residues 24 to 633 (ESWDPCVQVV…FNNATCQISK (610 aa)) are Extracellular-facing. Cys29 and Cys40 are joined by a disulfide. Asn35 carries an N-linked (GlcNAc...) asparagine glycan. LRR repeat units lie at residues 55 to 76 (STKE…SFSN), 79 to 100 (ELQV…AYQG), 103 to 124 (HLST…AFSG), 127 to 148 (SLQT…PIGH), 151 to 172 (TLKE…EYFS), 176 to 197 (NLEH…DLRV), 205 to 225 (NLSL…AFKE), and 227 to 247 (KLHK…KSCI). N-linked (GlcNAc...) asparagine glycosylation is found at Asn189 and Asn205. Residues Asn282 and Asn295 are each glycosylated (N-linked (GlcNAc...) asparagine). LRR repeat units follow at residues 353–374 (SLKR…VKLP), 375–398 (SLEF…ADLK), 401–423 (RLKH…MGLE), 424–445 (QLEH…PVFL), 449–459 (NLRYLDISYTN), 473–496 (SLQV…FREM), 498–519 (NLTT…AFCL), 522–543 (RLRV…PYKP), and 546–569 (SLQI…QHFP). Cys391 and Cys392 are oxidised to a cystine. N-linked (GlcNAc...) asparagine glycans are attached at residues Asn498 and Asn527. Asn576 carries N-linked (GlcNAc...) asparagine glycosylation. The LRRCT domain maps to 580–631 (NDFACVCEYQSFLQWVKDQRQLLVEVEHLVCAIPLQMRGMPVLGFNNATCQI). 2 cysteine pairs are disulfide-bonded: Cys584-Cys610 and Cys586-Cys629. Asn626 is a glycosylation site (N-linked (GlcNAc...) asparagine). Residues 634–654 (TIVGGSVFSILMVSVIAVLVY) form a helical membrane-spanning segment. Residues 655–843 (KFYFHLMLLA…SRQHDAETST (189 aa)) are Cytoplasmic-facing. One can recognise a TIR domain in the interval 674–817 (SIYDAFVIYS…IFWRRLRKAL (144 aa)). The segment at 824-843 (SPAGTADAAESRQHDAETST) is disordered. The span at 832–843 (AESRQHDAETST) shows a compositional bias: basic and acidic residues.

The protein belongs to the Toll-like receptor family. Belongs to the lipopolysaccharide (LPS) receptor, a multi-protein complex containing at least CD14, LY96 and TLR4. Binding to bacterial LPS leads to homodimerization. Interacts with LY96 via the extracellular domain. Interacts with MYD88 and TIRAP via their respective TIR domains. Interacts with NOX4. Interacts with CNPY3 and HSP90B1; this interaction is required for proper folding in the endoplasmic reticulum. Interacts with MAP3K21; this interaction leads to negative regulation of TLR4 signaling. Interacts with CD36, following CD36 stimulation by oxLDL or amyloid-beta 42, and forms a heterodimer with TLR6. The trimeric complex is internalized and triggers inflammatory response. LYN kinase activity facilitates TLR4-TLR6 heterodimerization and signal initiation. Interacts with TICAM1 in response to LPS in a WDFY1-dependent manner. Interacts with WDFY1 in response to LPS. Interacts with SMPDL3B. Interacts with CEACAM1; upon lipopolysaccharide stimulation, forms a complex including TLR4 and the phosphorylated form of SYK and CEACAM1, which in turn, recruits PTPN6 that dephosphorylates SYK, reducing the production of reactive oxygen species (ROS) and lysosome disruption, which in turn, reduces the activity of the inflammasome. Interacts with RFTN1; the interaction occurs in response to lipopolysaccharide stimulation. Interacts with SCIMP; the interaction occurs in response to lipopolysaccharide stimulation and is enhanced by phosphorylation of SCIMP by LYN. This interaction facilitates the phosphorylation of TLR4 by LYN which elicits a selective cytokine response in macrophages. Interacts with TRAF3IP3. Interacts with TREM1; this interaction enhances TLR4-mediated inflammatory response. Interacts with ZG16B/PAUF. Interacts with CD82; this interaction inhibits TLR4-mediated signaling pathway. Phosphorylated on tyrosine residues by LYN after binding lipopolysaccharide. Post-translationally, ubiquitinated by RNF128 via 'Lys-28'-linked polyubiquitin chains, leading to proteasomal degradation.

The protein localises to the cell membrane. It is found in the early endosome. Its subcellular location is the cell projection. It localises to the ruffle. Functionally, transmembrane receptor that functions as a pattern recognition receptor recognizing pathogen- and damage-associated molecular patterns (PAMPs and DAMPs) to induce innate immune responses via downstream signaling pathways. At the plasma membrane, cooperates with LY96 to mediate the innate immune response to bacterial lipopolysaccharide (LPS). Also involved in LPS-independent inflammatory responses triggered by free fatty acids, such as palmitate, and Ni(2+). Mechanistically, acts via MYD88, TIRAP and TRAF6, leading to NF-kappa-B activation, cytokine secretion and the inflammatory response. Alternatively, CD14-mediated TLR4 internalization via endocytosis is associated with the initiation of a MYD88-independent signaling via the TICAM1-TBK1-IRF3 axis leading to type I interferon production. In addition to the secretion of proinflammatory cytokines, initiates the activation of NLRP3 inflammasome and formation of a positive feedback loop between autophagy and NF-kappa-B signaling cascade. In complex with TLR6, promotes inflammation in monocytes/macrophages by associating with TLR6 and the receptor CD86. Upon ligand binding, such as oxLDL or amyloid-beta 42, the TLR4:TLR6 complex is internalized and triggers inflammatory response, leading to NF-kappa-B-dependent production of CXCL1, CXCL2 and CCL9 cytokines, via MYD88 signaling pathway, and CCL5 cytokine, via TICAM1 signaling pathway. In myeloid dendritic cells, vesicular stomatitis virus glycoprotein G but not LPS promotes the activation of IRF7, leading to type I IFN production in a CD14-dependent manner. The polypeptide is Toll-like receptor 4 (TLR4) (Equus caballus (Horse)).